Reading from the N-terminus, the 258-residue chain is Snake venom serine protease HS114 (258 aa).

A signal peptide spans 1 to 18; the sequence is MVLVRVVANLLILQLSYA. Residues 19–24 constitute a propeptide that is removed on maturation; sequence QKVSEL. A Peptidase S1 domain is found at 25–249; it reads VVGGDECNIN…YNTWIESVIA (225 aa). Disulfide bonds link C31–C163, C50–C66, C98–C256, C142–C210, C174–C189, and C200–C225. N-linked (GlcNAc...) asparagine glycosylation occurs at N44. Catalysis depends on charge relay system residues H65 and D110. S204 serves as the catalytic Charge relay system.

This sequence belongs to the peptidase S1 family. Snake venom subfamily. As to quaternary structure, monomer. Post-translationally, N-glycosylated. Contains approximately 10% carbohydrates. As to expression, expressed by the venom gland.

It localises to the secreted. Its activity is regulated as follows. Inhibited by benzamidine, PMSF, leupeptin, SDS and DTT, but not by EDTA, and commercial antivenom. Its function is as follows. Snake venom serine protease that shows non-specific action on fibrinogen. It preferentially degrades fibrinogen Aalpha (FGA), releasing fibrinopeptide A, and shows a lower activity on fibrinogen Bbeta (FGB), releasing fibrinopeptide B and other uncommon fibrinopeptides. Also shows low fibrinolytic activity compared to plasmin. Has high enzymatic activity on the substrates for activated protein C and factor XIa, and for thrombin. Shows a wide activity spectrum at different peptide sequences, with a preferential cleavage at Lys-|-Xaa over Arg-|-Xaa bonds. This chain is Snake venom serine protease HS114, found in Bothrops jararaca (Jararaca).